The chain runs to 282 residues: Snake venom serine protease BmSP (282 aa).

The N-terminal stretch at 1–18 is a signal peptide; sequence MVLIGVLASLLILQLSYS. Residues 19–56 constitute a propeptide that is removed on maturation; that stretch reads KSLDDGAKESAYDDEIQQSSWGNSTVNTTLTETVVIQL. N-linked (GlcNAc...) asparagine glycosylation is found at N41 and N45. Residues 57–280 form the Peptidase S1 domain; the sequence is IMGGSECYKS…YIDWIKGIIA (224 aa). Cystine bridges form between C63/C195, C82/C98, C174/C241, C206/C220, and C231/C256. The Charge relay system role is filled by H97. The N-linked (GlcNAc...) asparagine glycan is linked to N135. D142 acts as the Charge relay system in catalysis. N-linked (GlcNAc...) asparagine glycans are attached at residues N149 and N153. S235 serves as the catalytic Charge relay system.

Belongs to the peptidase S1 family. Snake venom subfamily. In terms of assembly, monomer. Expressed by the venom gland.

The protein localises to the secreted. Functionally, snake venom serine protease that may act in the hemostasis system of the prey. The protein is Snake venom serine protease BmSP of Bungarus multicinctus (Many-banded krait).